The following is a 177-amino-acid chain: MELILRADVENLGRLGDKVSVKPGYGRNYLIPQGLAMLATPANLRRFENESKKLQAKRDALIADAKGLADRLAEIAIVIEVRVGEGAKLYGSVTTAIIADKLAELGFDIDRKKIVLAEPIRSLGHYDVPVKLLPELRGSVKVSVVRQGGPEDEEIAEAAPVAEAQAEADGHSTEETA.

Residues 151–177 (EDEEIAEAAPVAEAQAEADGHSTEETA) are disordered. Low complexity predominate over residues 157–167 (EAAPVAEAQAE). Residues 168 to 177 (ADGHSTEETA) are compositionally biased toward basic and acidic residues.

The protein belongs to the bacterial ribosomal protein bL9 family.

In terms of biological role, binds to the 23S rRNA. The chain is Large ribosomal subunit protein bL9 from Solidesulfovibrio magneticus (strain ATCC 700980 / DSM 13731 / RS-1) (Desulfovibrio magneticus).